Consider the following 145-residue polypeptide: Probable WRKY transcription factor 75 (145 aa).

Over residues 20–38 the composition is skewed to basic and acidic residues; it reads SKPELHQGEEESSKVRSEG. The interval 20 to 55 is disordered; it reads SKPELHQGEEESSKVRSEGCSKSVESSKKKGKKQRY. Residues 61–126 constitute a DNA-binding region (WRKY); that stretch reads SQVDILDDGY…YEGVHSHPIE (66 aa).

Belongs to the WRKY group II-c family.

It is found in the nucleus. Functionally, transcription factor. Interacts specifically with the W box (5'-(T)TGAC[CT]-3'), a frequently occurring elicitor-responsive cis-acting element. The sequence is that of Probable WRKY transcription factor 75 (WRKY75) from Arabidopsis thaliana (Mouse-ear cress).